A 90-amino-acid polypeptide reads, in one-letter code: Probable Fe(2+)-trafficking protein (90 aa).

Belongs to the Fe(2+)-trafficking protein family.

Could be a mediator in iron transactions between iron acquisition and iron-requiring processes, such as synthesis and/or repair of Fe-S clusters in biosynthetic enzymes. This Photobacterium profundum (strain SS9) protein is Probable Fe(2+)-trafficking protein.